Here is a 262-residue protein sequence, read N- to C-terminus: Sulfur carrier protein FdhD (262 aa).

The Cysteine persulfide intermediate role is filled by cysteine 105. 246–251 (FVRKNR) provides a ligand contact to Mo-bis(molybdopterin guanine dinucleotide).

It belongs to the FdhD family.

Its subcellular location is the cytoplasm. Its function is as follows. Required for formate dehydrogenase (FDH) activity. Acts as a sulfur carrier protein that transfers sulfur from IscS to the molybdenum cofactor prior to its insertion into FDH. The polypeptide is Sulfur carrier protein FdhD (Picrophilus torridus (strain ATCC 700027 / DSM 9790 / JCM 10055 / NBRC 100828 / KAW 2/3)).